Here is a 395-residue protein sequence, read N- to C-terminus: Elongation factor Tu (395 aa).

The region spanning 10-204 (KTHANIGTIG…AVDEYIPTPE (195 aa)) is the tr-type G domain. Residues 19 to 26 (GHVDHGKT) form a G1 region. 19–26 (GHVDHGKT) is a GTP binding site. Threonine 26 lines the Mg(2+) pocket. The tract at residues 60–64 (GITIN) is G2. The tract at residues 81–84 (DCPG) is G3. GTP is bound by residues 81–85 (DCPGH) and 136–139 (NKVD). Residues 136–139 (NKVD) form a G4 region. The tract at residues 174–176 (SAL) is G5.

This sequence belongs to the TRAFAC class translation factor GTPase superfamily. Classic translation factor GTPase family. EF-Tu/EF-1A subfamily. Monomer.

Its subcellular location is the cytoplasm. The enzyme catalyses GTP + H2O = GDP + phosphate + H(+). GTP hydrolase that promotes the GTP-dependent binding of aminoacyl-tRNA to the A-site of ribosomes during protein biosynthesis. In Macrococcus caseolyticus (strain JCSC5402) (Macrococcoides caseolyticum), this protein is Elongation factor Tu.